Reading from the N-terminus, the 113-residue chain is Large ribosomal subunit protein bL19 (113 aa).

This sequence belongs to the bacterial ribosomal protein bL19 family.

Functionally, this protein is located at the 30S-50S ribosomal subunit interface and may play a role in the structure and function of the aminoacyl-tRNA binding site. This is Large ribosomal subunit protein bL19 from Mycobacterium leprae (strain Br4923).